Consider the following 573-residue polypeptide: L-lactate dehydrogenase (cytochrome) (573 aa).

The N-terminal 73 residues, 1–73 (MFKSQLRTAT…LYQKDKFISA (73 aa)), are a transit peptide targeting the mitochondrion. The region spanning 80–157 (DIELTPEIVS…PPEKHLGPLV (78 aa)) is the Cytochrome b5 heme-binding domain. The heme b site is built by histidine 115, histidine 138, and tyrosine 208. Residues 182–542 (PPLSQMINLH…TPELLDTRSI (361 aa)) enclose the FMN hydroxy acid dehydrogenase domain. Tyrosine 208 contacts pyruvate. FMN-binding positions include 260 to 263 (SATA), serine 290, and glutamine 313. Tyrosine 315 is a binding site for pyruvate. Position 341 (threonine 341) interacts with FMN. Lysine 357 contributes to the heme b binding site. Lysine 408 provides a ligand contact to FMN. Residues histidine 432 and arginine 435 each coordinate pyruvate. Residues 468–472 (DGGVR) and 491–492 (GR) each bind FMN.

In the N-terminal section; belongs to the cytochrome b5 family. This sequence in the C-terminal section; belongs to the FMN-dependent alpha-hydroxy acid dehydrogenase family. Homotetramer. FMN is required as a cofactor. Heme b serves as cofactor.

Its subcellular location is the mitochondrion intermembrane space. It catalyses the reaction (S)-lactate + 2 Fe(III)-[cytochrome c] = 2 Fe(II)-[cytochrome c] + pyruvate + 2 H(+). Catalyzes the oxidation of (S)-lactate (L-lactate) to pyruvate with subsequent transfer of electrons to cytochrome c. Is involved in the utilization of (S)-lactate as a sole source of carbon for growth. This is L-lactate dehydrogenase (cytochrome) (CYB2) from Wickerhamomyces anomalus (Yeast).